The primary structure comprises 3010 residues: Probable polyketide synthase 2 (3010 aa).

In terms of domain architecture, Ketosynthase family 3 (KS3) spans 9-432; sequence SRDVAVIGIG…GSNACLLLSE (424 aa). Catalysis depends on for beta-ketoacyl synthase activity residues Cys-174, His-313, and His-353. Residues 629–662 are acyl/malonyl transferase; the sequence is GINPSINVGHSFGEISSACCSGMLDLETACFIVY. Residue Ser-639 is the For acyl/malonyl transferase activity of the active site. The N-terminal hotdog fold stretch occupies residues 944 to 1063; that stretch reads ATQLGYRNDV…ARFSVLKHNS (120 aa). Positions 944 to 1235 constitute a PKS/mFAS DH domain; it reads ATQLGYRNDV…YSSISTDIKN (292 aa). The Proton acceptor; for dehydratase activity role is filled by His-976. The interval 1080 to 1235 is C-terminal hotdog fold; the sequence is NWTTIKRKEF…YSSISTDIKN (156 aa). The Proton donor; for dehydratase activity role is filled by Asp-1146. A Carrier domain is found at 2482 to 2559; sequence DNELSIRDDI…QLIQAVIQAV (78 aa). Ser-2519 is subject to O-(pantetheine 4'-phosphoryl)serine.

It depends on pantetheine 4'-phosphate as a cofactor.

Probable polyketide synthase. This Dictyostelium discoideum (Social amoeba) protein is Probable polyketide synthase 2 (pks2).